The sequence spans 148 residues: MMIFRALIAAATLAIAIATTLPAAADEVAVKMLNSGPGGMMVFDPALVRLKPGDSIKFLPTDKGHNVETIKGMAPDGADYVKTTVGQEAVVKFDKEGVYGFKCAPHYMMGMVALVVVGDKRDNLEAAKSVQHNKLTQKRLDPLFAQIQ.

A signal peptide spans 1 to 25; sequence MMIFRALIAAATLAIAIATTLPAAA. Residues 30–118 form the Plastocyanin-like domain; it reads VKMLNSGPGG…MGMVALVVVG (89 aa). Residues His-65, Cys-103, His-106, and Met-111 each coordinate Cu cation.

The cofactor is Cu cation.

The protein resides in the periplasm. The polypeptide is Pseudoazurin (Methylorubrum extorquens (strain ATCC 14718 / DSM 1338 / JCM 2805 / NCIMB 9133 / AM1) (Methylobacterium extorquens)).